An 807-amino-acid chain; its full sequence is DNA gyrase subunit B (807 aa).

The region spanning 429 to 543 (SELFIVEGDS…KGYLYIAQPP (115 aa)) is the Toprim domain. Positions 435, 508, and 510 each coordinate Mg(2+).

Belongs to the type II topoisomerase GyrB family. Heterotetramer, composed of two GyrA and two GyrB chains. In the heterotetramer, GyrA contains the active site tyrosine that forms a transient covalent intermediate with DNA, while GyrB binds cofactors and catalyzes ATP hydrolysis. Mg(2+) serves as cofactor. Requires Mn(2+) as cofactor. It depends on Ca(2+) as a cofactor.

The protein localises to the cytoplasm. The catalysed reaction is ATP-dependent breakage, passage and rejoining of double-stranded DNA.. Functionally, a type II topoisomerase that negatively supercoils closed circular double-stranded (ds) DNA in an ATP-dependent manner to modulate DNA topology and maintain chromosomes in an underwound state. Negative supercoiling favors strand separation, and DNA replication, transcription, recombination and repair, all of which involve strand separation. Also able to catalyze the interconversion of other topological isomers of dsDNA rings, including catenanes and knotted rings. Type II topoisomerases break and join 2 DNA strands simultaneously in an ATP-dependent manner. This chain is DNA gyrase subunit B, found in Rickettsia typhi (strain ATCC VR-144 / Wilmington).